The following is a 1829-amino-acid chain: DNA polymerase (1829 aa).

DOD-type homing endonuclease domains are found at residues 527-668 (LSGI…SLGI) and 1136-1269 (FLGY…SLGV).

Belongs to the DNA polymerase type-B family. This protein undergoes a protein self splicing that involves a post-translational excision of the three intervening regions (inteins) followed by peptide ligation.

It carries out the reaction DNA(n) + a 2'-deoxyribonucleoside 5'-triphosphate = DNA(n+1) + diphosphate. The polypeptide is DNA polymerase (pol) (Thermococcus aggregans).